A 182-amino-acid chain; its full sequence is MTFDSFDIKSLIRPVIDFPKPGVIFRDITPLFQSPRALRLVADSFAQRYVEADFTHIGAMDARGFLIGSIIAYQLNKPLILFRKQGKLPADVLAEGYQTEYGEAFLEVHADSLCEGDSVLMFDDLIATGGTLIAAANLVRRMGAKIFEAAAIIDLPELGGSQRLEEMGIPTFCLTQFALTER.

The protein belongs to the purine/pyrimidine phosphoribosyltransferase family. Homodimer.

It is found in the cytoplasm. It carries out the reaction AMP + diphosphate = 5-phospho-alpha-D-ribose 1-diphosphate + adenine. The protein operates within purine metabolism; AMP biosynthesis via salvage pathway; AMP from adenine: step 1/1. Functionally, catalyzes a salvage reaction resulting in the formation of AMP, that is energically less costly than de novo synthesis. The sequence is that of Adenine phosphoribosyltransferase from Pseudomonas fluorescens (strain SBW25).